The primary structure comprises 337 residues: tRNA N6-adenosine threonylcarbamoyltransferase (337 aa).

The Fe cation site is built by His111 and His115. Residues 134 to 138 (LVSGG), Asp167, Gly180, and Asn272 each bind substrate. Position 300 (Asp300) interacts with Fe cation.

Belongs to the KAE1 / TsaD family. The cofactor is Fe(2+).

The protein localises to the cytoplasm. It catalyses the reaction L-threonylcarbamoyladenylate + adenosine(37) in tRNA = N(6)-L-threonylcarbamoyladenosine(37) in tRNA + AMP + H(+). In terms of biological role, required for the formation of a threonylcarbamoyl group on adenosine at position 37 (t(6)A37) in tRNAs that read codons beginning with adenine. Is involved in the transfer of the threonylcarbamoyl moiety of threonylcarbamoyl-AMP (TC-AMP) to the N6 group of A37, together with TsaE and TsaB. TsaD likely plays a direct catalytic role in this reaction. The protein is tRNA N6-adenosine threonylcarbamoyltransferase of Shewanella amazonensis (strain ATCC BAA-1098 / SB2B).